We begin with the raw amino-acid sequence, 123 residues long: Holo-[acyl-carrier-protein] synthase (123 aa).

The Mg(2+) site is built by D8 and E56.

The protein belongs to the P-Pant transferase superfamily. AcpS family. It depends on Mg(2+) as a cofactor.

The protein localises to the cytoplasm. The catalysed reaction is apo-[ACP] + CoA = holo-[ACP] + adenosine 3',5'-bisphosphate + H(+). Functionally, transfers the 4'-phosphopantetheine moiety from coenzyme A to a Ser of acyl-carrier-protein. In Clostridium botulinum (strain Eklund 17B / Type B), this protein is Holo-[acyl-carrier-protein] synthase.